Reading from the N-terminus, the 98-residue chain is Small ribosomal subunit protein uS17 (98 aa).

It belongs to the universal ribosomal protein uS17 family. As to quaternary structure, part of the 30S ribosomal subunit.

One of the primary rRNA binding proteins, it binds specifically to the 5'-end of 16S ribosomal RNA. The sequence is that of Small ribosomal subunit protein uS17 from Synechococcus sp. (strain CC9605).